A 935-amino-acid chain; its full sequence is Mannosyltransferase regulator 14 (935 aa).

The Cytoplasmic segment spans residues 1–21 (MMLSLRRFSMYVLRSLRLHFK). Residues 22-42 (KIIITLLTIQLLFITIFVLGG) traverse the membrane as a helical; Signal-anchor for type II membrane protein segment. Residues 43–935 (RSSIIDGNWK…NNIFGSDQKY (893 aa)) lie on the Lumenal side of the membrane. Positions 498-500 (DHD) match the DXD motif.

The protein belongs to the MNN4 family.

It is found in the golgi apparatus membrane. In terms of biological role, plays a role in N-glycan mannosylphosphorylation and has partially redundant function with MNN4. The sequence is that of Mannosyltransferase regulator 14 from Saccharomyces cerevisiae (strain ATCC 204508 / S288c) (Baker's yeast).